The sequence spans 1405 residues: DNA-directed RNA polymerase subunit beta' (1405 aa).

Residues C70, C72, C85, and C88 each coordinate Zn(2+). The Mg(2+) site is built by D460, D462, and D464. Residues C814, C888, C895, and C898 each coordinate Zn(2+).

The protein belongs to the RNA polymerase beta' chain family. The RNAP catalytic core consists of 2 alpha, 1 beta, 1 beta' and 1 omega subunit. When a sigma factor is associated with the core the holoenzyme is formed, which can initiate transcription. The cofactor is Mg(2+). Zn(2+) serves as cofactor.

It carries out the reaction RNA(n) + a ribonucleoside 5'-triphosphate = RNA(n+1) + diphosphate. In terms of biological role, DNA-dependent RNA polymerase catalyzes the transcription of DNA into RNA using the four ribonucleoside triphosphates as substrates. The chain is DNA-directed RNA polymerase subunit beta' from Shewanella woodyi (strain ATCC 51908 / MS32).